The following is a 296-amino-acid chain: Coatomer subunit epsilon (296 aa).

It belongs to the COPE family. Oligomeric complex that consists of at least the alpha, beta, beta', gamma, delta, epsilon and zeta subunits. Interacts with the ESCRT-0 subunit VPS27.

The protein resides in the cytoplasm. It is found in the golgi apparatus membrane. It localises to the cytoplasmic vesicle. Its subcellular location is the COPI-coated vesicle membrane. Functionally, the coatomer is a cytosolic protein complex that binds to dilysine motifs and reversibly associates with Golgi non-clathrin-coated vesicles, which further mediate biosynthetic protein transport from the ER, via the Golgi up to the trans Golgi network. The coatomer complex is required for budding from Golgi membranes, and is essential for the retrograde Golgi-to-ER transport of dilysine-tagged proteins. This Saccharomyces cerevisiae (strain ATCC 204508 / S288c) (Baker's yeast) protein is Coatomer subunit epsilon (SEC28).